A 261-amino-acid polypeptide reads, in one-letter code: Thiazole synthase (261 aa).

Catalysis depends on Lys101, which acts as the Schiff-base intermediate with DXP. Residues Gly162, 188–189 (AG), and 210–211 (NT) contribute to the 1-deoxy-D-xylulose 5-phosphate site.

The protein belongs to the ThiG family. As to quaternary structure, homotetramer. Forms heterodimers with either ThiH or ThiS.

It localises to the cytoplasm. It carries out the reaction [ThiS sulfur-carrier protein]-C-terminal-Gly-aminoethanethioate + 2-iminoacetate + 1-deoxy-D-xylulose 5-phosphate = [ThiS sulfur-carrier protein]-C-terminal Gly-Gly + 2-[(2R,5Z)-2-carboxy-4-methylthiazol-5(2H)-ylidene]ethyl phosphate + 2 H2O + H(+). Its pathway is cofactor biosynthesis; thiamine diphosphate biosynthesis. Its function is as follows. Catalyzes the rearrangement of 1-deoxy-D-xylulose 5-phosphate (DXP) to produce the thiazole phosphate moiety of thiamine. Sulfur is provided by the thiocarboxylate moiety of the carrier protein ThiS. In vitro, sulfur can be provided by H(2)S. This is Thiazole synthase from Aromatoleum aromaticum (strain DSM 19018 / LMG 30748 / EbN1) (Azoarcus sp. (strain EbN1)).